Consider the following 134-residue polypeptide: Transcription antitermination protein NusB (134 aa).

It belongs to the NusB family.

In terms of biological role, involved in transcription antitermination. Required for transcription of ribosomal RNA (rRNA) genes. Binds specifically to the boxA antiterminator sequence of the ribosomal RNA (rrn) operons. This chain is Transcription antitermination protein NusB, found in Shewanella woodyi (strain ATCC 51908 / MS32).